Consider the following 264-residue polypeptide: Thymidylate synthase (264 aa).

Residue arginine 21 coordinates dUMP. Histidine 51 is a binding site for (6R)-5,10-methylene-5,6,7,8-tetrahydrofolate. Residue 126–127 coordinates dUMP; the sequence is RR. Cysteine 146 (nucleophile) is an active-site residue. DUMP contacts are provided by residues 166–169, asparagine 177, and 207–209; these read RSAD and HLY. Residue aspartate 169 participates in (6R)-5,10-methylene-5,6,7,8-tetrahydrofolate binding. A (6R)-5,10-methylene-5,6,7,8-tetrahydrofolate-binding site is contributed by alanine 263.

It belongs to the thymidylate synthase family. Bacterial-type ThyA subfamily. In terms of assembly, homodimer.

It localises to the cytoplasm. It carries out the reaction dUMP + (6R)-5,10-methylene-5,6,7,8-tetrahydrofolate = 7,8-dihydrofolate + dTMP. The protein operates within pyrimidine metabolism; dTTP biosynthesis. Functionally, catalyzes the reductive methylation of 2'-deoxyuridine-5'-monophosphate (dUMP) to 2'-deoxythymidine-5'-monophosphate (dTMP) while utilizing 5,10-methylenetetrahydrofolate (mTHF) as the methyl donor and reductant in the reaction, yielding dihydrofolate (DHF) as a by-product. This enzymatic reaction provides an intracellular de novo source of dTMP, an essential precursor for DNA biosynthesis. The protein is Thymidylate synthase of Nitrosomonas europaea (strain ATCC 19718 / CIP 103999 / KCTC 2705 / NBRC 14298).